The following is a 540-amino-acid chain: Bifunctional ribokinase/ribose-5-phosphate isomerase A (540 aa).

The ribokinase stretch occupies residues 1 to 308 (MKKIIVVGST…AILNVINQDQ (308 aa)). Residues 11-13 (NVD), 39-44 (GGKGAN), and E141 contribute to the substrate site. Residues N185 and 221 to 226 (TVGGRG) each bind ATP. K(+) is bound by residues D247 and T249. ATP is bound at residue 252-253 (GD). D253 contributes to the substrate binding site. The Proton acceptor; for ribokinase activity role is filled by D253. K(+) contacts are provided by T284, V287, G289, and S293. Residues 309–540 (MTKTEIEKQK…IKTIKRSDLS (232 aa)) form a ribose-5-phosphate isomerase A region. Substrate contacts are provided by residues 339 to 342 (SGTT), 395 to 398 (DGAD), and 408 to 411 (KGGG). E417 acts as the Proton acceptor; for ribose-5-phosphate isomerase activity in catalysis. K435 is a substrate binding site.

This sequence in the N-terminal section; belongs to the carbohydrate kinase PfkB family. Ribokinase subfamily. The protein in the C-terminal section; belongs to the ribose 5-phosphate isomerase family. Mg(2+) serves as cofactor.

The protein localises to the cytoplasm. The enzyme catalyses D-ribose + ATP = D-ribose 5-phosphate + ADP + H(+). It catalyses the reaction aldehydo-D-ribose 5-phosphate = D-ribulose 5-phosphate. Its pathway is carbohydrate metabolism; D-ribose degradation; D-ribose 5-phosphate from beta-D-ribopyranose: step 2/2. It participates in carbohydrate degradation; pentose phosphate pathway; D-ribose 5-phosphate from D-ribulose 5-phosphate (non-oxidative stage): step 1/1. Its activity is regulated as follows. Activated by a monovalent cation that binds near, but not in, the active site. The most likely occupant of the site in vivo is potassium. Also activated by ammonium ion. Ion binding induces a conformational change that may alter substrate affinity. In terms of biological role, bifunctional enzyme that catalyzes the phosphorylation of ribose at O-5 in a reaction requiring ATP and magnesium, and the reversible conversion of ribose 5-phosphate to ribulose 5-phosphate. The chain is Bifunctional ribokinase/ribose-5-phosphate isomerase A (rbsK/rbiA) from Fructilactobacillus sanfranciscensis (strain ATCC 27651 / DSM 20451 / JCM 5668 / CCUG 30143 / KCTC 3205 / NCIMB 702811 / NRRL B-3934 / L-12) (Lactobacillus sanfranciscensis).